Reading from the N-terminus, the 665-residue chain is Prelamin-A/C (665 aa).

Position 1 is an N-acetylmethionine (Met-1). Residues 1–25 (METPSQRRATRSGAQASSTPLSPTR) form a disordered region. The interval 1–33 (METPSQRRATRSGAQASSTPLSPTRITRLQEKE) is head. Residues 1 to 130 (METPSQRRAT…TKKEGDLLAA (130 aa)) are interaction with MLIP. Thr-3 is modified (phosphothreonine). Ser-5 is subject to Phosphoserine. Position 10 is a phosphothreonine (Thr-10). Ser-12 and Ser-18 each carry phosphoserine. Thr-19 carries the phosphothreonine modification. A Phosphoserine modification is found at Ser-22. Residues 31 to 387 (EKEDLQELND…KLLEGEEERL (357 aa)) enclose the IF rod domain. Lys-32 is subject to N6-acetyllysine; alternate. Lys-32 is modified (N6-succinyllysine; alternate). Residue Lys-32 forms a Glycyl lysine isopeptide (Lys-Gly) (interchain with G-Cter in SUMO2); alternate linkage. The interval 34-70 (DLQELNDRLAVYIDRVRSLETENAGLRLRITESEEVV) is coil 1A. A phosphoserine mark is found at Ser-51, Ser-66, and Ser-71. A linker 1 region spans residues 71-80 (SREVSGIKAA). 2 positions are modified to N6-acetyllysine: Lys-78 and Lys-97. The interval 81–218 (YEAELGDARK…NIYSEELRET (138 aa)) is coil 1B. Residue Lys-97 forms a Glycyl lysine isopeptide (Lys-Gly) (interchain with G-Cter in SUMO2) linkage. The residue at position 107 (Ser-107) is a Phosphoserine. An N6-acetyllysine mark is found at Lys-108, Lys-114, Lys-123, Lys-135, Lys-144, and Lys-155. Position 171 is an N6-acetyllysine; alternate (Lys-171). An N6-succinyllysine; alternate modification is found at Lys-171. Lys-171 participates in a covalent cross-link: Glycyl lysine isopeptide (Lys-Gly) (interchain with G-Cter in SUMO2); alternate. An N6-acetyllysine mark is found at Lys-180, Lys-201, and Lys-208. Lys-201 is covalently cross-linked (Glycyl lysine isopeptide (Lys-Gly) (interchain with G-Cter in SUMO2); alternate). A Glycyl lysine isopeptide (Lys-Gly) (interchain with G-Cter in SUMO); alternate cross-link involves residue Lys-201. A Glycyl lysine isopeptide (Lys-Gly) (interchain with G-Cter in SUMO2) cross-link involves residue Lys-208. Ser-212 carries the post-translational modification Phosphoserine. Glycyl lysine isopeptide (Lys-Gly) (interchain with G-Cter in SUMO2) cross-links involve residues Lys-219 and Lys-233. Residues 219 to 242 (KRRHETRLVEIDNGKQREFESRLA) form a linker 2 region. Residues Lys-233, Lys-260, Lys-265, and Lys-270 each carry the N6-acetyllysine modification. Positions 243–383 (DALQELRAQH…HAYRKLLEGE (141 aa)) are coil 2. Residue Lys-260 forms a Glycyl lysine isopeptide (Lys-Gly) (interchain with G-Cter in SUMO2); alternate linkage. Lys-270 participates in a covalent cross-link: Glycyl lysine isopeptide (Lys-Gly) (interchain with G-Cter in SUMO2); alternate. Ser-277, Ser-282, Ser-301, and Ser-307 each carry phosphoserine. Lys-311 participates in a covalent cross-link: Glycyl lysine isopeptide (Lys-Gly) (interchain with G-Cter in SUMO2); alternate. N6-acetyllysine occurs at positions 311, 316, and 341. Glycyl lysine isopeptide (Lys-Gly) (interchain with G-Cter in SUMO2) cross-links involve residues Lys-366 and Lys-378. A disordered region spans residues 384-442 (EERLRLSPSPTSQRSRGRASSHSSQSQGGGSVTKKRKLESSESRSSFSQHARTSGRVAV). The tail stretch occupies residues 384-665 (EERLRLSPSP…SQSSQNCSIM (282 aa)). Ser-390, Ser-392, Ser-395, Ser-398, Ser-403, Ser-404, Ser-406, Ser-407, Ser-409, and Ser-414 each carry phosphoserine. At Ser-392 the chain carries Phosphoserine; by CDK1. Positions 395 to 409 (SQRSRGRASSHSSQS) are enriched in low complexity. A Phosphothreonine modification is found at Thr-416. N6-acetyllysine is present on residues Lys-417 and Lys-420. Glycyl lysine isopeptide (Lys-Gly) (interchain with G-Cter in SUMO2) cross-links involve residues Lys-417 and Lys-420. Positions 417–422 (KKRKLE) match the Nuclear localization signal motif. Phosphoserine occurs at positions 423, 426, 429, and 431. The 118-residue stretch at 428–545 (SSFSQHARTS…EEVAMRKLVR (118 aa)) folds into the LTD domain. A Glycyl lysine isopeptide (Lys-Gly) (interchain with G-Cter in SUMO2); alternate cross-link involves residue Lys-450. An N6-acetyllysine mark is found at Lys-450 and Lys-457. 3 positions are modified to phosphoserine: Ser-458, Glu-460, and Ser-463. Lys-486 bears the N6-acetyllysine mark. Lys-486 is covalently cross-linked (Glycyl lysine isopeptide (Lys-Gly) (interchain with G-Cter in SUMO2)). Thr-496 carries the phosphothreonine modification. Phosphoserine is present on Ser-500. A phosphothreonine mark is found at Thr-505 and Thr-510. Phosphoserine occurs at positions 533 and 546. The residue at position 548 (Thr-548) is a Phosphothreonine. The segment at 553 to 577 (NEDDDEDGEELLHHHRGSHCSGSGD) is disordered. Phosphoserine occurs at positions 570, 572, and 573. Lys-599 is covalently cross-linked (Glycyl lysine isopeptide (Lys-Gly) (interchain with G-Cter in SUMO2); alternate). Lys-599 participates in a covalent cross-link: Glycyl lysine isopeptide (Lys-Gly) (interchain with G-Cter in SUMO1); alternate. Phosphoserine occurs at positions 613, 614, 617, and 620. Residues Ser-626 and Ser-629 are each glycosylated (O-linked (GlcNAc) serine). Phosphoserine is present on residues Ser-629, Ser-633, Ser-637, and Ser-653. A propeptide spans 648–662 (LLGNSSPRSQSSQNC) (removed in Lamin-A/C form). Position 662 is a cysteine methyl ester (Cys-662). A lipid anchor (S-farnesyl cysteine) is attached at Cys-662. The propeptide at 663–665 (SIM) is removed in Prelamin-A/C form and in Lamin-A/C form.

It belongs to the intermediate filament family. Homodimer of lamin A and lamin C. Lamin dimers then assemble into dimeric head-to-tail polymers. Ultimately, two head-to-tail polymers assemble laterally into a protofilament with a uniformly shaped rod of 3.5 nm in diameter. Interacts with lamin-associated polypeptides IA, IB and TMPO-alpha, RB1 and with emerin. Proteolytically processed isoform A interacts with NARF. Interacts with SREBF1, SREBF2, SUN1, SUN2 and TMEM43. Interacts with TMEM201. Prelamin-A/C interacts with EMD. Interacts with DMPK; may regulate nuclear envelope stability. Interacts with MLIP. Interacts with SUV39H1; the interaction increases stability of SUV39H1. Interacts with ITSN1 isoform 2. Interacts with IFFO1; the interaction forms an interior nucleoskeleton and the recruitment to DNA double-strand breaks. As to quaternary structure, interacts with EMD. In terms of assembly, interacts (via C-terminus) with LEMD2 (via N-terminus) (in vitro). In terms of processing, proteolytic cleavage of the C-terminal of 18 residues of prelamin-A/C results in the production of lamin-A/C. The prelamin-A/C maturation pathway includes farnesylation of CAAX motif by protein farnesyltransferase (FNTA and FNTB), removal of the last three amino acids (-AAX) by RCE1/FACE2 and/or ZMPSTE24, methylation of the C-terminal cysteine by ICMT and endoproteolytic removal of the last 15 C-terminal amino acids by ZMPSTE24. Proteolytic cleavage requires prior farnesylation and methylation, and absence of these blocks cleavage. Farnesylation of prelamin-A/C facilitates nuclear envelope targeting. Post-translationally, phosphorylation plays a key role in lamin organization, subcellular localization and nuclear envelope disintegration. Phosphorylation by CDK1 at Ser-22 and Ser-392 at the onset of mitosis drives lamin disassembly and nuclear envelope breakdown. Phosphorylation at Ser-22 and Ser-392 during interphase promotes localization to the nucleoplasm and regulates lamina assembly. Phosphorylation at Ser-22, Ser-392 and Ser-629 during interphase causes redistribution between the nucleus and the cytoplasm. Phosphorylation at Ser-22 by CDK1 regulates matrix stiffness. Phosphorylation status of Ser-22 determines its localization between double-strand break (DSB) sites and the nuclear matrix. Phosphorylated by ATR at Ser-282 in response to DNA damage, leading to lamin disassembly and nuclear envelope rupture. Phosphorylation also regulates stability in micronuclei arising from genome instability: phosphorylation at Ser-395 by ATR in response to genome instability and double-stranded DNA breaks primes LMNA for subsequent phosphorylation at Ser-392 by CDK1 and micronuclei envelope rupture. The rupture of micronuclear envelope triggers the cGAS-STING pathway thereby activating the type I interferon response and innate immunity. In terms of processing, isoform C is phosphorylated on Ser-392, Ser-407 and Ser-409 at interphase. Acetylation by KAT8 is required for nuclear architecture. Post-translationally, sumoylation is necessary for the localization to the nuclear envelope. In terms of processing, the N-terminus is blocked. In terms of tissue distribution, expressed in liver and in bone marrow (at protein level). Expressed in cardiomyocytes. Specifically expressed in germ cells.

It localises to the nucleus lamina. It is found in the nucleus envelope. The protein resides in the nucleus. Its subcellular location is the nucleoplasm. The protein localises to the nucleus matrix. Lamins are intermediate filament proteins that assemble into a filamentous meshwork, and which constitute the major components of the nuclear lamina, a fibrous layer on the nucleoplasmic side of the inner nuclear membrane. Lamins provide a framework for the nuclear envelope, bridging the nuclear envelope and chromatin, thereby playing an important role in nuclear assembly, chromatin organization, nuclear membrane and telomere dynamics. Lamin A and C also regulate matrix stiffness by conferring nuclear mechanical properties. The structural integrity of the lamina is strictly controlled by the cell cycle, as seen by the disintegration and formation of the nuclear envelope in prophase and telophase, respectively. Lamin A and C are present in equal amounts in the lamina of mammals. Also invoved in DNA repair: recruited by DNA repair proteins XRCC4 and IFFO1 to the DNA double-strand breaks (DSBs) to prevent chromosome translocation by immobilizing broken DNA ends. Required for normal development of peripheral nervous system and skeletal muscle and for muscle satellite cell proliferation. Required for osteoblastogenesis and bone formation. Also prevents fat infiltration of muscle and bone marrow, helping to maintain the volume and strength of skeletal muscle and bone. Required for cardiac homeostasis. Functionally, prelamin-A/C can accelerate smooth muscle cell senescence. It acts to disrupt mitosis and induce DNA damage in vascular smooth muscle cells (VSMCs), leading to mitotic failure, genomic instability, and premature senescence. Its function is as follows. Isoform C2 may have a role in determining the organization of nuclear and chromosomal structures during spermatogenesis. This is Prelamin-A/C (Lmna) from Mus musculus (Mouse).